A 92-amino-acid polypeptide reads, in one-letter code: Protein E7 (92 aa).

Residues methionine 1–glutamate 43 form an E7 terminal domain region. The short motif at leucine 24–glutamate 28 is the LXCXE motif; interaction with host RB1 and TMEM173/STING element. The segment at cysteine 55 to cysteine 91 is a zinc-finger region. The short motif at isoleucine 73–leucine 81 is the Nuclear export signal element.

This sequence belongs to the papillomaviridae E7 protein family. As to quaternary structure, homodimer. Homooligomer. Interacts with host RB1; this interaction induces dissociation of RB1-E2F1 complex thereby disrupting RB1 activity. Interacts with host EP300; this interaction represses EP300 transcriptional activity. Interacts with protein E2; this interaction inhibits E7 oncogenic activity. Interacts with host TMEM173/STING; this interaction impairs the ability of TMEM173/STING to sense cytosolic DNA and promote the production of type I interferon (IFN-alpha and IFN-beta). Highly phosphorylated.

The protein localises to the host cytoplasm. It is found in the host nucleus. Its function is as follows. Plays a role in viral genome replication by driving entry of quiescent cells into the cell cycle. Stimulation of progression from G1 to S phase allows the virus to efficiently use the cellular DNA replicating machinery to achieve viral genome replication. E7 protein has both transforming and trans-activating activities. Induces the disassembly of the E2F1 transcription factor from RB1, with subsequent transcriptional activation of E2F1-regulated S-phase genes. Interferes with host histone deacetylation mediated by HDAC1 and HDAC2, leading to transcription activation. Also plays a role in the inhibition of both antiviral and antiproliferative functions of host interferon alpha. Interaction with host TMEM173/STING impairs the ability of TMEM173/STING to sense cytosolic DNA and promote the production of type I interferon (IFN-alpha and IFN-beta). The sequence is that of Protein E7 from Homo sapiens (Human).